The chain runs to 955 residues: Aminopeptidase A (955 aa).

Residues 1-17 (MDIEDKSSKMHCMKGKH) are Cytoplasmic-facing. The chain crosses the membrane as a helical; Signal-anchor for type II membrane protein span at residues 18 to 38 (VAIICGVVIAVGLILGLGLGL). At 39 to 955 (GLKPEACNPP…LENSEQPNFV (917 aa)) the chain is on the extracellular side. A disordered region spans residues 49–69 (EDNGLLSTKPPTTSTPNVTNP). Residues 55 to 69 (STKPPTTSTPNVTNP) are compositionally biased toward low complexity. Asparagine 65, asparagine 118, and asparagine 192 each carry an N-linked (GlcNAc...) asparagine glycan. Glutamate 218 serves as a coordination point for substrate. N-linked (GlcNAc...) asparagine glycosylation is found at asparagine 312, asparagine 319, and asparagine 335. Position 352-356 (352-356 (GAMEN)) interacts with substrate. Histidine 388 is a binding site for Zn(2+). Glutamate 389 serves as the catalytic Proton acceptor. Zn(2+) is bound by residues histidine 392 and glutamate 411. 11 N-linked (GlcNAc...) asparagine glycosylation sites follow: asparagine 458, asparagine 547, asparagine 584, asparagine 592, asparagine 647, asparagine 674, asparagine 681, asparagine 759, asparagine 766, asparagine 823, and asparagine 836. A substrate-binding site is contributed by arginine 882.

It belongs to the peptidase M1 family. Homodimer; disulfide-linked. Zn(2+) is required as a cofactor.

The protein localises to the cell membrane. The enzyme catalyses Release of N-terminal glutamate (and to a lesser extent aspartate) from a peptide.. The partially purified protein is inhibited by the aminopeptidase competitive inhibitors amastatin (Leu and acidic inhibitor), and bestatin (Leu inhibitor), by chelating agents EDTA, and 1,10-Phenanthroline, as well as by Zn(2+) ions. Substrate specificity is modulated by Ca(2+), Ba(2+), and Mn(2+) ions which enhances the enzymatic activity for cleavage of acidic residues. In terms of biological role, venom protein that cleaves N-terminal acidic residues from peptides with high potency in presence of calcium. It may have several roles in venom including alteration of blood pressure by cleaving circulating angiotensin-2, general degradation of host tissue, increase of permeability to other venom components, and/or processing of other toxins in the venom. This Gloydius brevicauda (Korean slamosa snake) protein is Aminopeptidase A.